The following is a 259-amino-acid chain: Ribonuclease HII (259 aa).

The RNase H type-2 domain occupies 72 to 259; the sequence is SYIAGIDEVG…PIKDMIKNKL (188 aa). The a divalent metal cation site is built by D78, E79, and D170.

This sequence belongs to the RNase HII family. Mn(2+) serves as cofactor. Mg(2+) is required as a cofactor.

It localises to the cytoplasm. It carries out the reaction Endonucleolytic cleavage to 5'-phosphomonoester.. Functionally, endonuclease that specifically degrades the RNA of RNA-DNA hybrids. The polypeptide is Ribonuclease HII (Bacillus cytotoxicus (strain DSM 22905 / CIP 110041 / 391-98 / NVH 391-98)).